The following is a 564-amino-acid chain: Septation ring formation regulator EzrA (564 aa).

Topologically, residues 1–4 (MVLY) are extracellular. A helical transmembrane segment spans residues 5 to 23 (IILAIIVIILIAVGVLFYL). Residues 24–564 (RSNKRQIIEK…KHIEEEVIKQ (541 aa)) are Cytoplasmic-facing. Coiled coils occupy residues 99–138 (SFNASQSEIDDANELMDSYEQSYQQQLEDVNEIIALYKDN), 190–223 (DGNYVQAHNHIAALNEQMKQLRSYMEEIPELIRE), 271–300 (LISRLELEEANDKLANINDKLDDMYDLIEH), 350–435 (VRQF…RRLL), and 471–550 (VKQL…ESVE).

It belongs to the EzrA family.

It localises to the cell membrane. Its function is as follows. Negative regulator of FtsZ ring formation; modulates the frequency and position of FtsZ ring formation. Inhibits FtsZ ring formation at polar sites. Interacts either with FtsZ or with one of its binding partners to promote depolymerization. This Staphylococcus aureus (strain JH1) protein is Septation ring formation regulator EzrA.